A 524-amino-acid chain; its full sequence is GMP synthase [glutamine-hydrolyzing] (524 aa).

The Glutamine amidotransferase type-1 domain maps to 5 to 195 (KVIVIDFGGQ…VRGVCGCAGT (191 aa)). Cys-82 acts as the Nucleophile in catalysis. Active-site residues include His-169 and Glu-171. A GMPS ATP-PPase domain is found at 196 to 389 (WKMDSFVKNT…LGLPDYLVFR (194 aa)). 223–229 (SGGVDSS) serves as a coordination point for ATP.

In terms of assembly, homodimer.

The enzyme catalyses XMP + L-glutamine + ATP + H2O = GMP + L-glutamate + AMP + diphosphate + 2 H(+). The protein operates within purine metabolism; GMP biosynthesis; GMP from XMP (L-Gln route): step 1/1. Functionally, catalyzes the synthesis of GMP from XMP. The sequence is that of GMP synthase [glutamine-hydrolyzing] from Agathobacter rectalis (strain ATCC 33656 / DSM 3377 / JCM 17463 / KCTC 5835 / VPI 0990) (Eubacterium rectale).